A 514-amino-acid polypeptide reads, in one-letter code: Major facilitator superfamily domain-containing protein 4A (514 aa).

Transmembrane regions (helical) follow at residues 19–39, 53–73, 82–102, 107–127, and 139–159; these read LTYW…GPTL, ISWV…LGGV, LWAL…IPFC, VLAL…TVAN, and AVFL…SPLI. N-linked (GlcNAc...) asparagine glycans are attached at residues N177 and N203. 7 helical membrane passes run 221–241, 307–327, 347–367, 376–396, 400–420, 438–458, and 466–486; these read YAFW…LMLL, FFAI…LTGA, VAGY…LLSI, ATMV…LLIF, VVFL…TFPS, VLVT…GSIF, and FLVC…LLLF.

This sequence belongs to the major facilitator superfamily.

It localises to the membrane. This Pongo abelii (Sumatran orangutan) protein is Major facilitator superfamily domain-containing protein 4A (MFSD4A).